A 353-amino-acid polypeptide reads, in one-letter code: Photosystem II D2 protein (353 aa).

Thr-2 is subject to N-acetylthreonine. Position 2 is a phosphothreonine (Thr-2). The chain crosses the membrane as a helical span at residues Cys-41–Thr-61. His-118 contributes to the chlorophyll a binding site. Residues Gly-125–Pro-141 form a helical membrane-spanning segment. Residues Gln-130 and Asn-143 each contribute to the pheophytin a site. The helical transmembrane segment at Val-153–Ser-166 threads the bilayer. Chlorophyll a is bound at residue His-198. A helical transmembrane segment spans residues Ala-208–Asp-228. Residues His-215 and Phe-262 each coordinate a plastoquinone. His-215 is a Fe cation binding site. His-269 lines the Fe cation pocket. Residues Gly-279–Arg-295 traverse the membrane as a helical segment.

Belongs to the reaction center PufL/M/PsbA/D family. As to quaternary structure, PSII is composed of 1 copy each of membrane proteins PsbA, PsbB, PsbC, PsbD, PsbE, PsbF, PsbH, PsbI, PsbJ, PsbK, PsbL, PsbM, PsbT, PsbX, PsbY, PsbZ, Psb30/Ycf12, at least 3 peripheral proteins of the oxygen-evolving complex and a large number of cofactors. It forms dimeric complexes. The D1/D2 heterodimer binds P680, chlorophylls that are the primary electron donor of PSII, and subsequent electron acceptors. It shares a non-heme iron and each subunit binds pheophytin, quinone, additional chlorophylls, carotenoids and lipids. There is also a Cl(-1) ion associated with D1 and D2, which is required for oxygen evolution. The PSII complex binds additional chlorophylls, carotenoids and specific lipids. serves as cofactor.

It is found in the plastid. It localises to the chloroplast thylakoid membrane. The catalysed reaction is 2 a plastoquinone + 4 hnu + 2 H2O = 2 a plastoquinol + O2. In terms of biological role, photosystem II (PSII) is a light-driven water:plastoquinone oxidoreductase that uses light energy to abstract electrons from H(2)O, generating O(2) and a proton gradient subsequently used for ATP formation. It consists of a core antenna complex that captures photons, and an electron transfer chain that converts photonic excitation into a charge separation. The D1/D2 (PsbA/PsbD) reaction center heterodimer binds P680, the primary electron donor of PSII as well as several subsequent electron acceptors. D2 is needed for assembly of a stable PSII complex. This Populus deltoides (Eastern poplar) protein is Photosystem II D2 protein.